A 448-amino-acid polypeptide reads, in one-letter code: Exodeoxyribonuclease 7 large subunit (448 aa).

It belongs to the XseA family. As to quaternary structure, heterooligomer composed of large and small subunits.

It localises to the cytoplasm. The catalysed reaction is Exonucleolytic cleavage in either 5'- to 3'- or 3'- to 5'-direction to yield nucleoside 5'-phosphates.. Bidirectionally degrades single-stranded DNA into large acid-insoluble oligonucleotides, which are then degraded further into small acid-soluble oligonucleotides. The protein is Exodeoxyribonuclease 7 large subunit of Shewanella baltica (strain OS185).